A 120-amino-acid chain; its full sequence is Large ribosomal subunit protein uL18 (120 aa).

The protein belongs to the universal ribosomal protein uL18 family. Part of the 50S ribosomal subunit; part of the 5S rRNA/L5/L18/L25 subcomplex. Contacts the 5S and 23S rRNAs.

Functionally, this is one of the proteins that bind and probably mediate the attachment of the 5S RNA into the large ribosomal subunit, where it forms part of the central protuberance. The polypeptide is Large ribosomal subunit protein uL18 (Bacillus cytotoxicus (strain DSM 22905 / CIP 110041 / 391-98 / NVH 391-98)).